The chain runs to 423 residues: Putative competence-damage inducible protein (423 aa).

It belongs to the CinA family.

This is Putative competence-damage inducible protein from Streptococcus pyogenes serotype M6 (strain ATCC BAA-946 / MGAS10394).